A 1243-amino-acid chain; its full sequence is Tau-tubulin kinase 2 (1243 aa).

Residues 21 to 284 (WKVLRKIGGG…LLTSVFDNSI (264 aa)) form the Protein kinase domain. Residues 27–35 (IGGGGFGEI) and Lys-50 contribute to the ATP site. Catalysis depends on Asp-141, which acts as the Proton acceptor. Residue Ser-445 is modified to Phosphoserine. Over residues 674–683 (VASTQSTSGS) the composition is skewed to polar residues. Disordered stretches follow at residues 674–695 (VAST…KKDL) and 737–761 (TGHD…DPPD). A Phosphoserine modification is found at Ser-786. The tract at residues 1063–1086 (QINGSASPQFLPRPPPGKPPVRPG) is disordered. Pro residues predominate over residues 1073–1084 (LPRPPPGKPPVR). Phosphoserine is present on Ser-1102. Residues 1115–1129 (QNGSQKSRSTTQCKS) are compositionally biased toward polar residues. The tract at residues 1115-1243 (QNGSQKSRST…KSKPASKLSR (129 aa)) is disordered. Composition is skewed to low complexity over residues 1144–1170 (VVPR…PSRA), 1187–1202 (SKSP…SRRS), and 1227–1243 (SSKT…KLSR).

It belongs to the protein kinase superfamily. CK1 Ser/Thr protein kinase family. In terms of assembly, interacts with CEP164. Interacts with MCRS1; the interaction is required for recruitment of TTBK2 to the mother centriole.

It is found in the cell projection. It localises to the cilium. The protein resides in the cytoplasm. The protein localises to the cytoskeleton. Its subcellular location is the cilium basal body. It is found in the microtubule organizing center. It localises to the centrosome. The protein resides in the centriole. The protein localises to the cytosol. Its subcellular location is the nucleus. The enzyme catalyses L-seryl-[protein] + ATP = O-phospho-L-seryl-[protein] + ADP + H(+). It carries out the reaction L-threonyl-[protein] + ATP = O-phospho-L-threonyl-[protein] + ADP + H(+). In terms of biological role, serine/threonine kinase that acts as a key regulator of ciliogenesis: controls the initiation of ciliogenesis by binding to the distal end of the basal body and promoting the removal of CCP110, which caps the mother centriole, leading to the recruitment of IFT proteins, which build the ciliary axoneme. Has some substrate preference for proteins that are already phosphorylated on a Tyr residue at the +2 position relative to the phosphorylation site. Able to phosphorylate tau on serines in vitro. Phosphorylates MPHOSPH9 which promotes its ubiquitination and proteasomal degradation, loss of MPHOSPH9 facilitates the removal of the CP110-CEP97 complex (a negative regulator of ciliogenesis) from the mother centrioles, promoting the initiation of ciliogenesis. Required for recruitment of CPLANE2 and INTU to the mother centriole. The sequence is that of Tau-tubulin kinase 2 (Ttbk2) from Mus musculus (Mouse).